The sequence spans 316 residues: BTB/POZ domain-containing protein Y57A10B.3 (316 aa).

An N-terminal signal peptide occupies residues 1–21 (MSAMRRCTCFIICLLTSYTYG). N-linked (GlcNAc...) asparagine glycans are attached at residues Asn-91, Asn-107, Asn-118, Asn-133, Asn-191, and Asn-260. The BTB domain maps to 158-226 (RDAVLIVEGK…VHSTATFPND (69 aa)).

The protein localises to the secreted. In Caenorhabditis elegans, this protein is BTB/POZ domain-containing protein Y57A10B.3 (btb-14).